Reading from the N-terminus, the 345-residue chain is Phosphate acyltransferase (345 aa).

It belongs to the PlsX family. Homodimer. Probably interacts with PlsY.

Its subcellular location is the cytoplasm. It carries out the reaction a fatty acyl-[ACP] + phosphate = an acyl phosphate + holo-[ACP]. Its pathway is lipid metabolism; phospholipid metabolism. Catalyzes the reversible formation of acyl-phosphate (acyl-PO(4)) from acyl-[acyl-carrier-protein] (acyl-ACP). This enzyme utilizes acyl-ACP as fatty acyl donor, but not acyl-CoA. The protein is Phosphate acyltransferase of Wolbachia sp. subsp. Drosophila simulans (strain wRi).